The sequence spans 625 residues: MAATMNKTPATTFLLIPAAASLVLLLAAAASVEASAFDYAGAFDKCLLFFEAQRSGKLPDDRLVRWRGDSALTDGFSQGVDLVGGYYDSGDHVKFGLPMAYAVTMLSWGVVEFEKEMVDGNKLHRVLDAIRWGTNYFVKAHTQHNALWVQVGDGDSDHLCWERAEDMSTPRTAFKIDINNPGSEVAGETAAALAAAAKAFKPYDRMYSDLLLLHSKQLFTFADTFRGKYDDSLQSAKKFYPSASGYQDELLWAAAWLYEATGDEQYLRYVSQNAEAFGGTGWAVTEFSWDNKYAGLQVLLSKVLFEQGGSAAGYADTLKQYQAKAEFFLCACLQKNNGHNVKMTPGGLMYVSDWSNMQYVSSSAFLLTVYADYLAESRGTLRCPDGEVKPAEILLFARSQVDYVLGKNPKGMSYMVGYGSYYPTHVHHRGASIPSIYAMNATVGCMEGFDKYYNSKNADPNVLHGALVGGPDANDAYDDDRCNYQHAEPTLAGNAPMSGVFARLAASPADNTPEYTPAPNAPSPSNGGSPLEFVHTVTNTWKANGVDYYRHVVTAKNTCGHAITYLKLQIKELSGEIYGVSRTNAKDMYEFPSWMTRLDAGAQLTIVYIQGGPAAKIAVVEYKTA.

Residues 1 to 34 (MAATMNKTPATTFLLIPAAASLVLLLAAAASVEA) form the signal peptide. The active-site Nucleophile is the aspartate 91. Histidine 427 is a catalytic residue. An N-linked (GlcNAc...) asparagine glycan is attached at asparagine 440. Catalysis depends on residues aspartate 479 and glutamate 488. A disordered region spans residues 509–530 (ADNTPEYTPAPNAPSPSNGGSP).

Belongs to the glycosyl hydrolase 9 (cellulase E) family.

The protein resides in the secreted. The enzyme catalyses Endohydrolysis of (1-&gt;4)-beta-D-glucosidic linkages in cellulose, lichenin and cereal beta-D-glucans.. In Oryza sativa subsp. indica (Rice), this protein is Endoglucanase 13 (GLU6).